Here is a 388-residue protein sequence, read N- to C-terminus: GDP-4-keto-6-deoxy-D-mannose 3-dehydratase (388 aa).

26 to 29 (KMFT) is a binding site for GDP-4-dehydro-alpha-D-rhamnose. The helical transmembrane segment at 49–69 (YAVMVSSGSTANLLMIAALFF) threads the bilayer. Pyridoxal 5'-phosphate is bound by residues 56-57 (GS), tryptophan 88, glutamate 162, and serine 183. The active-site Proton donor/acceptor is the histidine 188. Histidine 215 contacts L-glutamate. Position 219 (arginine 219) interacts with GDP-4-dehydro-alpha-D-rhamnose. Residue asparagine 248 coordinates pyridoxal 5'-phosphate. Arginine 250 serves as a coordination point for L-glutamate. Glutamate 329 provides a ligand contact to GDP-4-dehydro-alpha-D-rhamnose.

It belongs to the DegT/DnrJ/EryC1 family. Homodimer. Pyridoxal 5'-phosphate serves as cofactor.

It localises to the cell membrane. The enzyme catalyses GDP-4-dehydro-alpha-D-rhamnose + L-glutamate = GDP-4-dehydro-3,6-dideoxy-alpha-D-mannose + 2-oxoglutarate + NH4(+). It participates in nucleotide-sugar metabolism; GDP-L-colitose biosynthesis. Its function is as follows. Involved in the biosynthesis of L-colitose, a 3,6-dideoxyhexose present in the O-antigen region of lipopolysaccharides (LPS), where it serves as an antigenic determinant and is vital for bacterial defense and survival. Catalyzes the removal of the C3'-hydroxyl group from GDP-4-keto-6-deoxy-D-mannose via a combined transamination-deoxygenation reaction. The catalysis is initiated by a transamination step in which pyridoxal 5'-phosphate (PLP) is converted to pyridoxamine 5'-phosphate (PMP) in the presence of L-glutamate. This coenzyme then forms a Schiff base with GDP-4-keto-6-deoxy-D-mannose and the resulting adduct undergoes a PMP-mediated beta-dehydration reaction to give a sugar enamine intermediate, which after tautomerization and hydrolysis to release ammonia yields GDP-4-keto-3,6-dideoxy-D-mannose as a product. In vitro, is able to catalyze the formation of GDP-4-keto-3,6-dideoxymannose using GDP-perosamine rather than GDP-4-keto-6-deoxymannose as a substrate, with no need of glutamate. This is GDP-4-keto-6-deoxy-D-mannose 3-dehydratase from Escherichia coli O55:H7 (strain CB9615 / EPEC).